We begin with the raw amino-acid sequence, 498 residues long: Protein translocase subunit SecY (498 aa).

Helical transmembrane passes span 23–43 (FVISVFVTLFLILLFRVISVI), 65–87 (FDLFNLLGGGGLSQLSLFAVGIS), 124–144 (ITRFVTLPFAVVQAFAIIALI), 163–183 (AFYIVTMTAGTYIGIFIGDII), 191–211 (GITLLILSGILARLPDGFIVM), 229–249 (AINFSLYFLAFLVLLLAISFV), 281–301 (AAGVIPVIFASSIMSIPITIA), 322–342 (PVGISLYVILIIIFTFFYSYI), 382–402 (FIGAPFLAIVAVIPYIISLVL), and 406–426 (TTLSLGGTGIIIMVSASMELY). Residues 478 to 488 (VEPTQDKKKNP) are compositionally biased toward basic and acidic residues. The segment at 478–498 (VEPTQDKKKNPSDPLEVSQLW) is disordered.

Belongs to the SecY/SEC61-alpha family. In terms of assembly, component of the Sec protein translocase complex. Heterotrimer consisting of SecY, SecE and SecG subunits. The heterotrimers can form oligomers, although 1 heterotrimer is thought to be able to translocate proteins. Interacts with the ribosome. Interacts with SecDF, and other proteins may be involved. Interacts with SecA.

It is found in the cell membrane. In terms of biological role, the central subunit of the protein translocation channel SecYEG. Consists of two halves formed by TMs 1-5 and 6-10. These two domains form a lateral gate at the front which open onto the bilayer between TMs 2 and 7, and are clamped together by SecE at the back. The channel is closed by both a pore ring composed of hydrophobic SecY resides and a short helix (helix 2A) on the extracellular side of the membrane which forms a plug. The plug probably moves laterally to allow the channel to open. The ring and the pore may move independently. This chain is Protein translocase subunit SecY, found in Mycoplasmoides gallisepticum (strain R(low / passage 15 / clone 2)) (Mycoplasma gallisepticum).